Here is a 32-residue protein sequence, read N- to C-terminus: Photosystem II reaction center protein T (32 aa).

A helical membrane pass occupies residues 3-23 (TLVYTFLLIGTLAVLFAAVFF).

It belongs to the PsbT family. In terms of assembly, PSII is composed of 1 copy each of membrane proteins PsbA, PsbB, PsbC, PsbD, PsbE, PsbF, PsbH, PsbI, PsbJ, PsbK, PsbL, PsbM, PsbT, PsbX, PsbY, PsbZ, Psb30/Ycf12, at least 3 peripheral proteins of the oxygen-evolving complex and a large number of cofactors. It forms dimeric complexes.

It is found in the plastid. The protein localises to the chloroplast thylakoid membrane. Found at the monomer-monomer interface of the photosystem II (PS II) dimer, plays a role in assembly and dimerization of PSII. PSII is a light-driven water plastoquinone oxidoreductase, using light energy to abstract electrons from H(2)O, generating a proton gradient subsequently used for ATP formation. This Guillardia theta (Cryptophyte) protein is Photosystem II reaction center protein T.